A 398-amino-acid chain; its full sequence is MALLRRPTVSSDLENIDTGFNSKVKSHVTIRRTVLEEIGNKVTTRAAQVAKKAQNTKVPVQPTKTTNVNKQLKPTASVKPVQMEMLAPKGPSPTPEDVSMKEENLCQAFSDALLCKIEDIDNEDWENPQLCSDYVKDIYQYLRQLEVLQSINPHFLDGRDINGRMRAILVDWLVQVHSKFRLLQETLYMCVAIMDRFLQVQPVSRKKLQLVGITALLLASKYEEMFSPNIEDFVYITDNAYTSSQIREMETLILKELKFELGRPLPLHFLRRASKAGEVDVEQHTLAKYLMELTLIDYDMVHYHPSKVAAAASCLSQKLLGQGKWNLKQQYYTGYTENEVLEVMQHMAKNVVKVDENLTKFIAIKNKYASSKLLKISTIPQLNSKAVKDLASPLMGRS.

Residue Thr8 is modified to Phosphothreonine. A phosphoserine mark is found at Ser11, Ser77, and Ser92. The residue at position 94 (Thr94) is a Phosphothreonine. 3 positions are modified to phosphoserine: Ser99, Ser392, and Ser398.

It belongs to the cyclin family. Cyclin AB subfamily. In terms of assembly, interacts with the CDK1 protein kinase to form a serine/threonine kinase holoenzyme complex also known as maturation promoting factor (MPF). The cyclin subunit imparts substrate specificity to the complex.

Its function is as follows. Essential for the control of the cell cycle at the G2/M (mitosis) transition. The polypeptide is G2/mitotic-specific cyclin-B2 (CCNB2) (Macaca fascicularis (Crab-eating macaque)).